We begin with the raw amino-acid sequence, 521 residues long: Fucosyltransferase 3 (521 aa).

A compositionally biased stretch (basic and acidic residues) spans 1 to 12 (MKRGKKNSDAGD). Residues 1 to 29 (MKRGKKNSDAGDRLTNSDTRTGSSELNAM) form a disordered region. At 1–39 (MKRGKKNSDAGDRLTNSDTRTGSSELNAMMKPSLSSMKT) the chain is on the cytoplasmic side. Polar residues predominate over residues 14–26 (LTNSDTRTGSSEL). A helical; Signal-anchor for type II membrane protein transmembrane segment spans residues 40 to 60 (MGLLLAVLMVASVMFSLSVVL). The Lumenal segment spans residues 61-521 (RDPPSDDVIE…QATLFHGCKD (461 aa)). 3 N-linked (GlcNAc...) asparagine glycosylation sites follow: Asn152, Asn222, and Asn493.

This sequence belongs to the glycosyltransferase 37 family. Expressed in roots, stems, leaves, flowers, siliques and seedlings.

The protein localises to the golgi apparatus. It localises to the golgi stack membrane. Its pathway is protein modification; protein glycosylation. May be involved in cell wall biosynthesis. May act as a fucosyltransferase. This chain is Fucosyltransferase 3 (FUT3), found in Arabidopsis thaliana (Mouse-ear cress).